Here is a 410-residue protein sequence, read N- to C-terminus: MTINATVKEAGFRPASRISSIGVSEILKIGARAAAMKREGKPVIILGAGEPDFDTPDHVKQAASDAIHRGETKYTALDGTPELKKAIREKFQRENGLAYELDEITVATGAKQILFNAMMASLDPGDEVVIPTPYWTSYSDIVQICEGKPILIACDASSGFRLTAQKLEAAITPRTRWVLLNSPSNPSGAAYSAADYRPLLDVLLKHPHVWLLVDDMYEHIVYDAFRFVTPARLEPGLKDRTLTVNGVSKAYAMTGWRIGYAGGPRALIKAMAVVQSQATSCPSSVSQAASVAALNGPQDFLKERTESFQRRRNLVVNGLNAIEGLDCRVPEGAFYTFSGCAGVARRVTPSGKRIESDTDFCAYLLEDSHVAVVPGSAFGLSPYFRISYATSEAELKEALERISAACKRLS.

Positions 47, 135, and 185 each coordinate L-aspartate. Lys-249 is subject to N6-(pyridoxal phosphate)lysine. Arg-385 serves as a coordination point for L-aspartate.

It belongs to the class-I pyridoxal-phosphate-dependent aminotransferase family. Homodimer. Pyridoxal 5'-phosphate is required as a cofactor.

Its subcellular location is the cytoplasm. It carries out the reaction L-aspartate + 2-oxoglutarate = oxaloacetate + L-glutamate. Functionally, catalyzes the reversible conversion of aspartate and 2-oxoglutarate to glutamate and oxaloacetate. This is Aspartate aminotransferase from Rhizobium meliloti (Ensifer meliloti).